Reading from the N-terminus, the 972-residue chain is RNA polymerase-associated protein RapA (972 aa).

Positions 164-334 (EVGRRYAPRV…FARLRLLDPD (171 aa)) constitute a Helicase ATP-binding domain. 177 to 184 (DEVGLGKT) is a binding site for ATP. A DEAH box motif is present at residues 280–283 (DEAH). The region spanning 493-671 (RVNWLLEMLK…HEPEALENLI (179 aa)) is the Helicase C-terminal domain.

This sequence belongs to the SNF2/RAD54 helicase family. RapA subfamily. As to quaternary structure, interacts with the RNAP. Has a higher affinity for the core RNAP than for the holoenzyme. Its ATPase activity is stimulated by binding to RNAP.

Transcription regulator that activates transcription by stimulating RNA polymerase (RNAP) recycling in case of stress conditions such as supercoiled DNA or high salt concentrations. Probably acts by releasing the RNAP, when it is trapped or immobilized on tightly supercoiled DNA. Does not activate transcription on linear DNA. Probably not involved in DNA repair. The polypeptide is RNA polymerase-associated protein RapA (Photobacterium profundum (strain SS9)).